Consider the following 341-residue polypeptide: Bis(monoacylglycero)phosphate synthase CLN5 (341 aa).

Residues 1-13 (MLRGGPCGAHWRP) lie on the Cytoplasmic side of the membrane. The helical; Signal-anchor for type II membrane protein transmembrane segment at 14–30 (ALALALLGLATILGASP) threads the bilayer. Residues 31 to 341 (TSGQRWPVPY…PTRHTTFTDL (311 aa)) lie on the Lumenal side of the membrane. 2 cysteine pairs are disulfide-bonded: cysteine 53–cysteine 142 and cysteine 60–cysteine 148. The active-site Proton acceptor is the histidine 100. Asparagine 113, asparagine 126, asparagine 161, and asparagine 186 each carry an N-linked (GlcNAc...) asparagine glycan. The active-site Nucleophile; Acyl-thioester intermediate is cysteine 214. N-linked (GlcNAc...) asparagine glycans are attached at residues asparagine 238, asparagine 254, and asparagine 264. The membrane-anchoring stretch occupies residues 287–326 (FLMNFLKIFDTVIIHRQFYLFYNFEYWFLPMKPPFVKITY).

This sequence belongs to the CLN5 family. As to quaternary structure, multimer. Interacts with PPT1, TPP1, CLN3, CLN6, CLN8, ATP5F1A and ATP5F1B. Interacts with SORT1, RAB5A and RAB7A. Post-translationally, N-glycosylated with both high mannose and complex type sugars. Glycosylation is important for proper folding and trafficking to the lysosomes. The type II membrane signal anchor is proteolytically cleaved to produce a mature form that is transported to the lysosomes (Bis(monoacylglycero)phosphate synthase CLN5, secreted form). In terms of processing, can undergo proteolytic cleavage at the C-terminus, probably by a cysteine protease and may involve the removal of approximately 10-15 residues from the C-terminal end. In terms of tissue distribution, heart, kidney, liver, spleen, muscle and rectum (at protein level).

Its subcellular location is the lysosome. The protein resides in the membrane. It carries out the reaction S-hexadecanoyl-L-cysteinyl-[protein] + H2O = L-cysteinyl-[protein] + hexadecanoate + H(+). The catalysed reaction is 2 1-acyl-sn-glycero-3-phospho-(1'-sn-glycerol) = 1-acyl-sn-glycero-3-phospho-(3'-acyl-sn-1'-glycerol) + sn-glycero-3-phospho-(1'-sn-glycerol). The enzyme catalyses 2 1-(9Z-octadecenoyl)-sn-glycero-3-phospho-(1'-sn-glycerol) = 1-(9Z-octadecenoyl)-sn-glycero-3-phospho-(3'-(9Z-octadecenoyl)-1'-sn-glycerol) + sn-glycero-3-phospho-(1'-sn-glycerol). It catalyses the reaction 2 1-octadecanoyl-sn-glycero-3-phospho-(1'-sn-glycerol) = 1-octadecanoyl-sn-glycero-3-phospho-(3'-octadecanoyl-1'-sn-glycerol) + sn-glycero-3-phospho-(1'-sn-glycerol). It carries out the reaction 2 1-hexadecanoyl-sn-glycero-3-phospho-(1'-sn-glycerol) = 1-hexadecanoyl-sn-glycero-3-phospho-(3'-hexadecanoyl-1'-sn-glycerol) + sn-glycero-3-phospho-(1'-sn-glycerol). The catalysed reaction is 2 1-tetradecanoyl-sn-glycero-3-phospho-(1'-sn-glycerol) = 1-tetradecanoyl-sn-glycero-3-phospho-(3'-tetradecanoyl-1'-sn-glycerol) + sn-glycero-3-phospho-(1'-sn-glycerol). Functionally, catalyzes the synthesis of bis(monoacylglycero)phosphate (BMP) via transacylation of 2 molecules of lysophosphatidylglycerol (LPG). BMP also known as lysobisphosphatidic acid plays a key role in the formation of intraluminal vesicles and in maintaining intracellular cholesterol homeostasis. Can use only LPG as the exclusive lysophospholipid acyl donor for base exchange and displays BMP synthase activity towards various LPGs (LPG 14:0, LPG 16:0, LPG 18:0, LPG 18:1) with a higher preference for longer chain lengths. Plays a role in influencing the retrograde trafficking of lysosomal sorting receptors SORT1 and IGF2R from the endosomes to the trans-Golgi network by controlling the recruitment of retromer complex to the endosomal membrane. Regulates the localization and activation of RAB7A which is required to recruit the retromer complex to the endosomal membrane. Its function is as follows. Exhibits palmitoyl protein thioesterase (S-depalmitoylation) activity in vitro and most likely plays a role in protein S-depalmitoylation. The protein is Bis(monoacylglycero)phosphate synthase CLN5 (Cln5) of Mus musculus (Mouse).